The following is a 76-amino-acid chain: Small ribosomal subunit protein bS18 (76 aa).

This sequence belongs to the bacterial ribosomal protein bS18 family. As to quaternary structure, part of the 30S ribosomal subunit. Forms a tight heterodimer with protein bS6.

Binds as a heterodimer with protein bS6 to the central domain of the 16S rRNA, where it helps stabilize the platform of the 30S subunit. This is Small ribosomal subunit protein bS18 from Psychrobacter arcticus (strain DSM 17307 / VKM B-2377 / 273-4).